The chain runs to 479 residues: 3-phytase B (479 aa).

A signal peptide spans 1 to 19; sequence MPRTSLLTLACALATGASA. The Nucleophile role is filled by His82. Residues Asn106, Asn191, Asn227, Asn250, and Asn315 are each glycosylated (N-linked (GlcNAc...) asparagine). The Proton donor role is filled by Asp338. 3 N-linked (GlcNAc...) asparagine glycosylation sites follow: Asn425, Asn442, and Asn458.

Belongs to the histidine acid phosphatase family.

It catalyses the reaction 1D-myo-inositol hexakisphosphate + H2O = 1D-myo-inositol 1,2,4,5,6-pentakisphosphate + phosphate. Catalyzes the hydrolysis of inorganic orthophosphate from phytate. The protein is 3-phytase B (phyB) of Aspergillus niger.